Here is a 277-residue protein sequence, read N- to C-terminus: Large ribosomal subunit protein uL2 (277 aa).

2 disordered regions span residues 1-58 (MGIR…GGGH) and 223-277 (GVVM…GKKR). Positions 23–33 (EITRSEPEKSL) are enriched in basic and acidic residues. The span at 37–58 (LHGRGGRNAHGKITTRHKGGGH) shows a compositional bias: basic residues. Residues 251–267 (GKPEGRTRRNKPSDKLI) show a composition bias toward basic and acidic residues. Positions 268–277 (VRRRRTGKKR) are enriched in basic residues.

It belongs to the universal ribosomal protein uL2 family. Part of the 50S ribosomal subunit. Forms a bridge to the 30S subunit in the 70S ribosome.

Functionally, one of the primary rRNA binding proteins. Required for association of the 30S and 50S subunits to form the 70S ribosome, for tRNA binding and peptide bond formation. It has been suggested to have peptidyltransferase activity; this is somewhat controversial. Makes several contacts with the 16S rRNA in the 70S ribosome. The chain is Large ribosomal subunit protein uL2 from Saccharopolyspora erythraea (strain ATCC 11635 / DSM 40517 / JCM 4748 / NBRC 13426 / NCIMB 8594 / NRRL 2338).